Consider the following 80-residue polypeptide: Toxin Acra I-3 (80 aa).

The signal sequence occupies residues 1–22 (MMKLVLLSVIVILFSLIGSIHG). Residues 25–80 (VPGNYPLDSSGNKYPCTVLGDNQSCIDVCKKHGVKYGYCYGFKCWCEYLKDKNVSL) enclose the LCN-type CS-alpha/beta domain. Cystine bridges form between Cys-40–Cys-63, Cys-49–Cys-68, and Cys-53–Cys-70.

It belongs to the long (3 C-C) scorpion toxin superfamily. Sodium/Potassium channel inhibitor family. Expressed by the venom gland.

It is found in the secreted. Functionally, probable neurotoxin that inhibits ion channels. Is toxic to mice. In Androctonus crassicauda (Arabian fat-tailed scorpion), this protein is Toxin Acra I-3.